A 246-amino-acid polypeptide reads, in one-letter code: Transcription factor A, mitochondrial (246 aa).

The transit peptide at 1-42 directs the protein to the mitochondrion; it reads MAFLRSMWGVLSALGRSGAAVCIGCGSRLRSPFSFVYLPKCF. Residues 50–118 constitute a DNA-binding region (HMG box 1); it reads PKKPVSSYLR…VYKEKISRFK (69 aa). Phosphoserine; by PKA is present on residues serine 55, serine 56, and serine 61. Residue threonine 122 is modified to Phosphothreonine. The HMG box 2 DNA-binding region spans 155–219; that stretch reads PKRPRSAYNV…RYHNEMKSWE (65 aa). At serine 160 the chain carries Phosphoserine; by PKA. A phosphoserine mark is found at serine 193 and serine 195.

Monomer; binds DNA as a monomer. Homodimer. Component of the mitochondrial transcription initiation complex, composed at least of TFB2M, TFAM and POLRMT. In this complex TFAM recruits POLRMT to the promoter whereas TFB2M induces structural changes in POLRMT to enable promoter opening and trapping of the DNA non-template strand. Upon metabolic stress, forms a complex composed of FOXO3, SIRT3, TFAM and POLRMT. Interacts with TFB1M and TFB2M. Interacts with CLPX; this enhances DNA-binding. Post-translationally, phosphorylation by PKA within the HMG box 1 impairs DNA binding and promotes degradation by the AAA+ Lon protease.

Its subcellular location is the mitochondrion. The protein localises to the mitochondrion matrix. It localises to the mitochondrion nucleoid. Its function is as follows. Binds to the mitochondrial light strand promoter and functions in mitochondrial transcription regulation. Component of the mitochondrial transcription initiation complex, composed at least of TFB2M, TFAM and POLRMT that is required for basal transcription of mitochondrial DNA. In this complex, TFAM recruits POLRMT to a specific promoter whereas TFB2M induces structural changes in POLRMT to enable promoter opening and trapping of the DNA non-template strand. Required for accurate and efficient promoter recognition by the mitochondrial RNA polymerase. Promotes transcription initiation from the HSP1 and the light strand promoter by binding immediately upstream of transcriptional start sites. Is able to unwind DNA. Bends the mitochondrial light strand promoter DNA into a U-turn shape via its HMG boxes. Required for maintenance of normal levels of mitochondrial DNA. May play a role in organizing and compacting mitochondrial DNA. The sequence is that of Transcription factor A, mitochondrial from Trachypithecus cristatus (Silvered leaf-monkey).